The following is a 63-amino-acid chain: Protein DsrB (63 aa).

This sequence belongs to the DsrB family.

This is Protein DsrB from Yersinia pseudotuberculosis serotype O:1b (strain IP 31758).